A 501-amino-acid polypeptide reads, in one-letter code: MEALLQLKGIDKAFPGVKALSGAALNVYPGRVMALVGENGAGKSTMMKVLTGIYTRDAGTLLWLGKETTFTGPKSSQEAGIGIIHQELNLIPQLTIAENIFLGREFVNRFGKIDWKTMYAEADKLLAKLNLRFKSDKLVGDLSIGDQQMVEIAKVLSFESKVIIMDEPTDALTDTETESLFRVIRELKSQGRGIVYISHRMKEIFEICDDVTVFRDGQFIAEREVASLTEDSLIEMMVGRKLEDQYPHLNKAPGDIRLKVDNLCGPGVNDVSFTLRKGEILGVSGLMGAGRTELMKVLYGALPRTSGYVTLDGHEVVTRSPQDGLANGIVYISEDRKRDGLVLGMSVKENMSLTALRYFSRAGGSLKHADEQQAVSDFIRLFNVKTPSMEQAIGLLSGGNQQKVAIARGLMTRPKVLILDEPTRGVDVGAKKEIYQLINQFKADGLSIILVSSEMPEVLGMSDRIIVMHEGHLSGEFTREQATQEVLMAAAVGKLNRVNQE.

ABC transporter domains are found at residues 5-241 and 252-495; these read LQLK…VGRK and APGD…VGKL. 37–44 contributes to the ATP binding site; the sequence is GENGAGKS.

It belongs to the ABC transporter superfamily. Ribose importer (TC 3.A.1.2.1) family. As to quaternary structure, the complex is composed of an ATP-binding protein (RbsA), two transmembrane proteins (RbsC) and a solute-binding protein (RbsB).

The protein resides in the cell inner membrane. The enzyme catalyses D-ribose(out) + ATP + H2O = D-ribose(in) + ADP + phosphate + H(+). In terms of biological role, part of the ABC transporter complex RbsABC involved in ribose import. Responsible for energy coupling to the transport system. The polypeptide is Ribose import ATP-binding protein RbsA (Escherichia coli (strain UTI89 / UPEC)).